We begin with the raw amino-acid sequence, 298 residues long: Nucleotide-binding protein RSKD131_3085 (298 aa).

Residue 11–18 (GPSGAGRT) participates in ATP binding. 58 to 61 (DVRN) is a binding site for GTP.

Belongs to the RapZ-like family.

Displays ATPase and GTPase activities. This Cereibacter sphaeroides (strain KD131 / KCTC 12085) (Rhodobacter sphaeroides) protein is Nucleotide-binding protein RSKD131_3085.